An 885-amino-acid polypeptide reads, in one-letter code: DNA mismatch repair protein MutS (885 aa).

Residues 1–67 (MAPGEQQLSL…SNNDDEGLPR (67 aa)) form a disordered region. The segment covering 26–36 (SEDKTEESERP) has biased composition (basic and acidic residues). ATP is bound at residue 691–698 (GPNASGKS).

The protein belongs to the DNA mismatch repair MutS family.

Its function is as follows. This protein is involved in the repair of mismatches in DNA. It is possible that it carries out the mismatch recognition step. This protein has a weak ATPase activity. This chain is DNA mismatch repair protein MutS, found in Synechococcus sp. (strain RCC307).